The sequence spans 342 residues: MKKIVFEKRDLSTEDSEAIANALMKGEIPEIQVSALLTSLAMKGESFEEIVGFARAMRNNAIKISYPEALDTAGTGGDGLGTINVSTITAIILSQLFPVAKHGNRSVSGKSGSADVLEALGYNINIAPELANKLIKENNFVFLFAQIYHPAMKNVANVRKTLGIRTIFNLLGPLTNPAGTRYQLIGLFSSKVMDIVAKAASLLDYKKVFIYHGEPGIDEISPYGYTTVYEITNGKIQQYRLHYSDFGLKRQIPIEKITATSANESAIKILRGVMGIDSDIRDFIGINVAVGLKLIGKAEDARDGFEYAMQLMESTIQHLRRIIESNGDIKKFDQLVRQVGKG.

5-phospho-alpha-D-ribose 1-diphosphate is bound by residues Gly-74, 77–78 (GD), Thr-82, 84–87 (NVST), 101–109 (KHGNRSVSG), and Ser-113. Gly-74 lines the anthranilate pocket. Ser-86 serves as a coordination point for Mg(2+). An anthranilate-binding site is contributed by Asn-104. Position 159 (Arg-159) interacts with anthranilate. Positions 218 and 219 each coordinate Mg(2+).

The protein belongs to the anthranilate phosphoribosyltransferase family. As to quaternary structure, homodimer. Requires Mg(2+) as cofactor.

The catalysed reaction is N-(5-phospho-beta-D-ribosyl)anthranilate + diphosphate = 5-phospho-alpha-D-ribose 1-diphosphate + anthranilate. The protein operates within amino-acid biosynthesis; L-tryptophan biosynthesis; L-tryptophan from chorismate: step 2/5. Functionally, catalyzes the transfer of the phosphoribosyl group of 5-phosphorylribose-1-pyrophosphate (PRPP) to anthranilate to yield N-(5'-phosphoribosyl)-anthranilate (PRA). The sequence is that of Anthranilate phosphoribosyltransferase from Sulfolobus acidocaldarius (strain ATCC 33909 / DSM 639 / JCM 8929 / NBRC 15157 / NCIMB 11770).